The chain runs to 148 residues: Hemoglobin subunit gamma (148 aa).

The Globin domain occupies 3–148; that stretch reads HFTAEEKAII…VAIAMGHKYH (146 aa). 2 residues coordinate heme b: His64 and His93.

The protein belongs to the globin family. As to quaternary structure, heterotetramer of two alpha chains and two gamma chains in fetal hemoglobin (Hb F). Red blood cells.

Its function is as follows. Gamma chains make up the fetal hemoglobin F, in combination with alpha chains. The protein is Hemoglobin subunit gamma (HBG) of Carlito syrichta (Philippine tarsier).